The primary structure comprises 323 residues: D-alanine--D-alanine ligase (323 aa).

The region spanning 102–300 (KQIFRAEGIP…FTELVERMLQ (199 aa)) is the ATP-grasp domain. 130–185 (VARLGSPLVVKPSNSGSTVGISLARDEVSLAQGLALASSVSSRVFLERYIPGKEIT) contributes to the ATP binding site. Positions 254, 267, and 269 each coordinate Mg(2+).

This sequence belongs to the D-alanine--D-alanine ligase family. It depends on Mg(2+) as a cofactor. Mn(2+) serves as cofactor.

Its subcellular location is the cytoplasm. It carries out the reaction 2 D-alanine + ATP = D-alanyl-D-alanine + ADP + phosphate + H(+). It functions in the pathway cell wall biogenesis; peptidoglycan biosynthesis. Functionally, cell wall formation. The polypeptide is D-alanine--D-alanine ligase (Synechococcus sp. (strain JA-3-3Ab) (Cyanobacteria bacterium Yellowstone A-Prime)).